A 238-amino-acid polypeptide reads, in one-letter code: MTKEQFAEVLAAQGISLTDRQKEQFDHFFRLLVEWNEKMNLTGITEEGQVYNKHFYDSITPAFYFPFDQVQSVVDIGGGAGFPSIPLKICFPHLKMTIIDSLNKRMSFLQHVAKELGLENVNPVHGRAEDRGQEAMYREKFDLVVARAVARLNLLSEFCLPFAKVGGHFVALKGAEITPELAEAKKAIKTLGGKTRKVETFQLLEEAGERNIVIMEKIEATPKSYPRKAGVPAKKPLV.

S-adenosyl-L-methionine-binding positions include G77, F82, 128–129 (AE), and R147.

The protein belongs to the methyltransferase superfamily. RNA methyltransferase RsmG family.

The protein localises to the cytoplasm. Functionally, specifically methylates the N7 position of guanine in position 535 of 16S rRNA. This is Ribosomal RNA small subunit methyltransferase G from Brevibacillus brevis (strain 47 / JCM 6285 / NBRC 100599).